A 274-amino-acid chain; its full sequence is 1D-myo-inositol 2-acetamido-2-deoxy-alpha-D-glucopyranoside deacetylase 2 (274 aa).

Positions 6, 9, and 140 each coordinate Zn(2+).

This sequence belongs to the MshB deacetylase family. Zn(2+) serves as cofactor.

It carries out the reaction 1D-myo-inositol 2-acetamido-2-deoxy-alpha-D-glucopyranoside + H2O = 1D-myo-inositol 2-amino-2-deoxy-alpha-D-glucopyranoside + acetate. Its function is as follows. Catalyzes the deacetylation of 1D-myo-inositol 2-acetamido-2-deoxy-alpha-D-glucopyranoside (GlcNAc-Ins) in the mycothiol biosynthesis pathway. The polypeptide is 1D-myo-inositol 2-acetamido-2-deoxy-alpha-D-glucopyranoside deacetylase 2 (Saccharopolyspora erythraea (strain ATCC 11635 / DSM 40517 / JCM 4748 / NBRC 13426 / NCIMB 8594 / NRRL 2338)).